A 264-amino-acid polypeptide reads, in one-letter code: ATP synthase subunit a (264 aa).

The next 5 membrane-spanning stretches (helical) occupy residues 39 to 59 (LDTL…FYIV), 97 to 117 (VAPL…MDLV), 139 to 159 (TADP…VIFY), 205 to 225 (LFGN…LPWW), and 239 to 259 (LLVI…YISL).

Belongs to the ATPase A chain family. F-type ATPases have 2 components, CF(1) - the catalytic core - and CF(0) - the membrane proton channel. CF(1) has five subunits: alpha(3), beta(3), gamma(1), delta(1), epsilon(1). CF(0) has three main subunits: a(1), b(2) and c(9-12). The alpha and beta chains form an alternating ring which encloses part of the gamma chain. CF(1) is attached to CF(0) by a central stalk formed by the gamma and epsilon chains, while a peripheral stalk is formed by the delta and b chains.

The protein resides in the cell inner membrane. Its function is as follows. Key component of the proton channel; it plays a direct role in the translocation of protons across the membrane. The sequence is that of ATP synthase subunit a from Coxiella burnetii (strain RSA 331 / Henzerling II).